The sequence spans 150 residues: CASP-like protein 2 (150 aa).

Residues 1-17 (MKPEAGDGRSGWRWVAT) lie on the Cytoplasmic side of the membrane. Residues 18-38 (FDLILRLAAIVATSTAVLAAM) traverse the membrane as a helical segment. Topologically, residues 39–41 (GKT) are extracellular. A helical membrane pass occupies residues 42–62 (FVVVVNGVACFYLLMSLPVSI). The Cytoplasmic portion of the chain corresponds to 63 to 82 (FNIMRPGACPANRAVLTALD). The helical transmembrane segment at 83–103 (MVTVALVTAGALVAGILYLVH) threads the bilayer. Over 104–121 (KAGDTHADWFSIWSQLDS) the chain is Extracellular. A helical membrane pass occupies residues 122-142 (LSYLAVLALILHVLLSGSILY). Residues 143–150 (KQALNIMF) lie on the Cytoplasmic side of the membrane.

Belongs to the Casparian strip membrane proteins (CASP) family. Homodimer and heterodimers.

Its subcellular location is the cell membrane. In Picea sitchensis (Sitka spruce), this protein is CASP-like protein 2.